Reading from the N-terminus, the 159-residue chain is MRIVLQKVSEGSVDVVDETSGEVDTTFEPQHIGIGYVLLVGVEDTDGAKQIDWLAHKIANLRVFEDENGKMNRSIHDVDGSVLSISQFTLYADVRKGNRPSFVKAGAPDHAEQVWHAFNDALRAQGLDVKEGRFGAHMRVSLTNDGPVTIIFDTDELGI.

A Gly-cisPro motif, important for rejection of L-amino acids motif is present at residues 146-147; the sequence is GP.

It belongs to the DTD family. In terms of assembly, homodimer.

The protein resides in the cytoplasm. The catalysed reaction is glycyl-tRNA(Ala) + H2O = tRNA(Ala) + glycine + H(+). It catalyses the reaction a D-aminoacyl-tRNA + H2O = a tRNA + a D-alpha-amino acid + H(+). An aminoacyl-tRNA editing enzyme that deacylates mischarged D-aminoacyl-tRNAs. Also deacylates mischarged glycyl-tRNA(Ala), protecting cells against glycine mischarging by AlaRS. Acts via tRNA-based rather than protein-based catalysis; rejects L-amino acids rather than detecting D-amino acids in the active site. By recycling D-aminoacyl-tRNA to D-amino acids and free tRNA molecules, this enzyme counteracts the toxicity associated with the formation of D-aminoacyl-tRNA entities in vivo and helps enforce protein L-homochirality. The polypeptide is D-aminoacyl-tRNA deacylase (Bifidobacterium adolescentis (strain ATCC 15703 / DSM 20083 / NCTC 11814 / E194a)).